We begin with the raw amino-acid sequence, 755 residues long: von Willebrand factor A domain-containing protein 2 (755 aa).

The N-terminal stretch at 1–23 is a signal peptide; it reads MPPFLLLEAVCVFLFSRVPPSLP. In terms of domain architecture, VWFA 1 spans 51–222; the sequence is DIMFLLDGSN…DATNGLFSTL (172 aa). An N-linked (GlcNAc...) asparagine glycan is attached at Asn-147. Residues 296–333 enclose the EGF-like 1 domain; that stretch reads PGPCDSQPCQNGGTCVPEGLDGYQCLCPLAFGGEANCA. Disulfide bonds link Cys-299/Cys-310, Cys-304/Cys-320, and Cys-322/Cys-332. VWFA domains follow at residues 343–517 and 531–705; these read DLLF…QGKL and DLVF…IEWL. The 37-residue stretch at 712 to 748 folds into the EGF-like 2 domain; the sequence is PVNLCKPSPCMNEGSCVLQNGSYRCKCRDGWEGPHCE. 3 cysteine pairs are disulfide-bonded: Cys-716–Cys-727, Cys-721–Cys-736, and Cys-738–Cys-747.

As to quaternary structure, forms monomers and multimers. In terms of processing, a 55 kDa form is produced by proteolytic cleavage. Expression is generally absent in normal colon and other normal body tissues, but it is induced an average of 78-fold in Stage II, III, and IV colon cancers, as well as in colon adenomas and colon cancer cell lines.

It is found in the secreted. The protein is von Willebrand factor A domain-containing protein 2 (VWA2) of Homo sapiens (Human).